The primary structure comprises 900 residues: Phosphoenolpyruvate carboxylase (900 aa).

Residues His-140 and Lys-568 contribute to the active site.

The protein belongs to the PEPCase type 1 family. It depends on Mg(2+) as a cofactor.

It catalyses the reaction oxaloacetate + phosphate = phosphoenolpyruvate + hydrogencarbonate. Forms oxaloacetate, a four-carbon dicarboxylic acid source for the tricarboxylic acid cycle. In Neisseria meningitidis serogroup A / serotype 4A (strain DSM 15465 / Z2491), this protein is Phosphoenolpyruvate carboxylase.